Reading from the N-terminus, the 315-residue chain is Putative carboxypeptidase RC0549 (315 aa).

S125 serves as the catalytic Nucleophile. Residues E225 and H288 each act as charge relay system in the active site.

It belongs to the peptidase S66 family.

In Rickettsia conorii (strain ATCC VR-613 / Malish 7), this protein is Putative carboxypeptidase RC0549.